Reading from the N-terminus, the 871-residue chain is Envelope glycoprotein gp160 (871 aa).

Residues 1 to 21 (MKNLIGITLILIITILGIGFS) form the signal peptide. Residues 22-684 (TYYTTVFYGV…DITQWLWYIK (663 aa)) are Extracellular-facing. The cysteines at positions 43 and 63 are disulfide-linked. Residues N77, N124, N127, N142, N153, N157, N185, N194, N229, N238, N259, N273, N285, N289, N297, N329, N345, N352, N384, N387, N395, N398, N438, N451, and N496 are each glycosylated (N-linked (GlcNAc...) asparagine; by host). 5 cysteine pairs are disulfide-bonded: C108–C202, C115–C193, C120–C154, C215–C244, and C225–C236. Residues 120 to 153 (CTMTNTTNKTLNSATTTLTPTVNLSSIPNYEVYN) are V1. Residues 154-193 (CSFNQTTEFRDKKKQIYSLFYREDIVKEDGNNNSYYLHNC) form a V2 region. A V3 region spans residues 292–325 (CERTGNNTRGQVQIGPGMTFYNIENVVGDTRKAY). A disulfide bridge connects residues C292 and C326. 2 disulfides stabilise this stretch: C376–C435 and C383–C408. A V4 region spans residues 383-408 (CNLTNWTNTWTANRTNNTHGTLVAPC). The V5 stretch occupies residues 451–458 (NNSYTPQF). Residues 502 to 522 (RDVGIGLLFLGFLSAAGSTMG) are fusion peptide. The tract at residues 567 to 583 (LQARMLAVEKYIRDQQL) is immunosuppression. 4 N-linked (GlcNAc...) asparagine; by host glycosylation sites follow: N602, N613, N626, and N638. Residues 645–668 (SLLEKAQTQQEKNKQELLELDKWS) are a coiled coil. Positions 663 to 684 (ELDKWSSLWDWFDITQWLWYIK) are MPER; binding to GalCer. A helical membrane pass occupies residues 685-705 (IAIIIVAGLVGLRILMFIVNV). Residues 706-871 (VKQVRQGYTP…IRQGLELALN (166 aa)) lie on the Cytoplasmic side of the membrane. The YXXL motif; contains endocytosis signal signature appears at 713 to 716 (YTPL).

The mature envelope protein (Env) consists of a homotrimer of non-covalently associated gp120-gp41 heterodimers. The resulting complex protrudes from the virus surface as a spike. Interacts with host CD4 and CCR5. Gp120 also interacts with the C-type lectins CD209/DC-SIGN and CLEC4M/DC-SIGNR (collectively referred to as DC-SIGN(R)). In terms of assembly, the mature envelope protein (Env) consists of a homotrimer of non-covalently associated gp120-gp41 heterodimers. The resulting complex protrudes from the virus surface as a spike. In terms of processing, specific enzymatic cleavages in vivo yield mature proteins. Envelope glycoproteins are synthesized as an inactive precursor that is heavily N-glycosylated and processed likely by host cell furin in the Golgi to yield the mature SU and TM proteins. The cleavage site between SU and TM requires the minimal sequence [KR]-X-[KR]-R.

Its subcellular location is the virion membrane. It is found in the host cell membrane. The protein resides in the host endosome membrane. Its function is as follows. The surface protein gp120 (SU) attaches the virus to the host lymphoid cell by binding to the primary receptor CD4. This interaction induces a structural rearrangement creating a high affinity binding site for a chemokine coreceptor like CCR5. This peculiar 2 stage receptor-interaction strategy allows gp120 to maintain the highly conserved coreceptor-binding site in a cryptic conformation, protected from neutralizing antibodies. These changes are transmitted to the transmembrane protein gp41 and are thought to activate its fusogenic potential by unmasking its fusion peptide. Functionally, surface protein gp120 (SU) may target the virus to gut-associated lymphoid tissue (GALT) by binding host ITGA4/ITGB7 (alpha-4/beta-7 integrins), a complex that mediates T-cell migration to the GALT. Interaction between gp120 and ITGA4/ITGB7 would allow the virus to enter GALT early in the infection, infecting and killing most of GALT's resting CD4+ T-cells. This T-cell depletion is believed to be the major insult to the host immune system leading to AIDS. In terms of biological role, the surface protein gp120 is a ligand for CD209/DC-SIGN and CLEC4M/DC-SIGNR, which are respectively found on dendritic cells (DCs), and on endothelial cells of liver sinusoids and lymph node sinuses. These interactions allow capture of viral particles at mucosal surfaces by these cells and subsequent transmission to permissive cells. DCs are professional antigen presenting cells, critical for host immunity by inducing specific immune responses against a broad variety of pathogens. They act as sentinels in various tissues where they take up antigen, process it, and present it to T-cells following migration to lymphoid organs. SIV subverts the migration properties of dendritic cells to gain access to CD4+ T-cells in lymph nodes. Virus transmission to permissive T-cells occurs either in trans (without DCs infection, through viral capture and transmission), or in cis (following DCs productive infection, through the usual CD4-gp120 interaction), thereby inducing a robust infection. In trans infection, bound virions remain infectious over days and it is proposed that they are not degraded, but protected in non-lysosomal acidic organelles within the DCs close to the cell membrane thus contributing to the viral infectious potential during DCs' migration from the periphery to the lymphoid tissues. On arrival at lymphoid tissues, intact virions recycle back to DCs' cell surface allowing virus transmission to CD4+ T-cells. Virion capture also seems to lead to MHC-II-restricted viral antigen presentation, and probably to the activation of SIV-specific CD4+ cells. The transmembrane protein gp41 (TM) acts as a class I viral fusion protein. Under the current model, the protein has at least 3 conformational states: pre-fusion native state, pre-hairpin intermediate state, and post-fusion hairpin state. During fusion of viral and target intracellular membranes, the coiled coil regions (heptad repeats) assume a trimer-of-hairpins structure, positioning the fusion peptide in close proximity to the C-terminal region of the ectodomain. The formation of this structure appears to drive apposition and subsequent fusion of viral and target cell membranes. Complete fusion occurs in host cell endosomes. The virus undergoes clathrin-dependent internalization long before endosomal fusion, thus minimizing the surface exposure of conserved viral epitopes during fusion and reducing the efficacy of inhibitors targeting these epitopes. Membranes fusion leads to delivery of the nucleocapsid into the cytoplasm. Its function is as follows. The envelope glycoprotein gp160 precursor down-modulates cell surface CD4 antigen by interacting with it in the endoplasmic reticulum and blocking its transport to the cell surface. Functionally, the gp120-gp41 heterodimer allows rapid transcytosis of the virus through CD4 negative cells such as simple epithelial monolayers of the intestinal, rectal and endocervical epithelial barriers. Both gp120 and gp41 specifically recognize glycosphingolipids galactosyl-ceramide (GalCer) or 3' sulfo-galactosyl-ceramide (GalS) present in the lipid rafts structures of epithelial cells. Binding to these alternative receptors allows the rapid transcytosis of the virus through the epithelial cells. This transcytotic vesicle-mediated transport of virions from the apical side to the basolateral side of the epithelial cells does not involve infection of the cells themselves. The sequence is that of Envelope glycoprotein gp160 from Simian immunodeficiency virus (isolate TAN1) (SIV-cpz).